Consider the following 348-residue polypeptide: Dihydroorotase (348 aa).

Zn(2+)-binding residues include His-17 and His-19. Residues 19 to 21 (HLR) and Asn-45 each bind substrate. Positions 103, 140, and 178 each coordinate Zn(2+). Residue Lys-103 is modified to N6-carboxylysine. Residue His-140 participates in substrate binding. Leu-223 contacts substrate. Asp-251 contacts Zn(2+). Residue Asp-251 is part of the active site. Residues His-255 and Ala-267 each contribute to the substrate site.

Belongs to the metallo-dependent hydrolases superfamily. DHOase family. Class II DHOase subfamily. Homodimer. It depends on Zn(2+) as a cofactor.

It carries out the reaction (S)-dihydroorotate + H2O = N-carbamoyl-L-aspartate + H(+). It participates in pyrimidine metabolism; UMP biosynthesis via de novo pathway; (S)-dihydroorotate from bicarbonate: step 3/3. Catalyzes the reversible cyclization of carbamoyl aspartate to dihydroorotate. In Salmonella paratyphi B (strain ATCC BAA-1250 / SPB7), this protein is Dihydroorotase.